The primary structure comprises 273 residues: NADPH-dependent 7-cyano-7-deazaguanine reductase (273 aa).

81 to 83 provides a ligand contact to substrate; the sequence is VES. 83 to 84 is a binding site for NADPH; sequence SK. The active-site Thioimide intermediate is Cys179. The active-site Proton donor is Asp186. Substrate is bound at residue 218 to 219; that stretch reads AE. Residue 247–248 coordinates NADPH; sequence RG.

This sequence belongs to the GTP cyclohydrolase I family. QueF type 2 subfamily. Homodimer.

It localises to the cytoplasm. The enzyme catalyses 7-aminomethyl-7-carbaguanine + 2 NADP(+) = 7-cyano-7-deazaguanine + 2 NADPH + 3 H(+). It participates in tRNA modification; tRNA-queuosine biosynthesis. Catalyzes the NADPH-dependent reduction of 7-cyano-7-deazaguanine (preQ0) to 7-aminomethyl-7-deazaguanine (preQ1). This Rickettsia prowazekii (strain Madrid E) protein is NADPH-dependent 7-cyano-7-deazaguanine reductase.